The chain runs to 750 residues: Photosystem I P700 chlorophyll a apoprotein A1 (750 aa).

A run of 8 helical transmembrane segments spans residues 70 to 93, 156 to 179, 195 to 219, 291 to 309, 346 to 369, 385 to 411, 433 to 455, and 531 to 549; these read VFSAHFGQLSIIFLWLSGMYFHGA, LYCTAIGALVFAALMLFAGWFHYH, LNHHLAGLLGLGSLSWAGHQVHVSL, IAHHHLAIAILFLVAGHMY, WHAQLSLNLAMLGSSTIVVAHHMY, LSLFTHHMWIGGFLIVGAAAHAAIFMV, AIISHLNWACIFLGFHSFGLYIH, and FLVHHIHAFTIHVTVLILL. The [4Fe-4S] cluster site is built by cysteine 573 and cysteine 582. The next 2 helical transmembrane spans lie at 589–610 and 664–686; these read HVFLGLFWMYNAISVVIFHFSW and LSAYGLFFLGAHFVWAFSLMFLF. A chlorophyll a'-binding site is contributed by histidine 675. Residues methionine 683 and tyrosine 691 each contribute to the chlorophyll a site. Tryptophan 692 contributes to the phylloquinone binding site. The helical transmembrane segment at 724–744 threads the bilayer; that stretch reads AVGVTHYLLGGIATTWAFFLA.

This sequence belongs to the PsaA/PsaB family. As to quaternary structure, the PsaA/B heterodimer binds the P700 chlorophyll special pair and subsequent electron acceptors. PSI consists of a core antenna complex that captures photons, and an electron transfer chain that converts photonic excitation into a charge separation. The eukaryotic PSI reaction center is composed of at least 11 subunits. Requires P700 is a chlorophyll a/chlorophyll a' dimer, A0 is one or more chlorophyll a, A1 is one or both phylloquinones and FX is a shared 4Fe-4S iron-sulfur center. as cofactor.

It is found in the plastid. The protein localises to the chloroplast thylakoid membrane. The catalysed reaction is reduced [plastocyanin] + hnu + oxidized [2Fe-2S]-[ferredoxin] = oxidized [plastocyanin] + reduced [2Fe-2S]-[ferredoxin]. Functionally, psaA and PsaB bind P700, the primary electron donor of photosystem I (PSI), as well as the electron acceptors A0, A1 and FX. PSI is a plastocyanin-ferredoxin oxidoreductase, converting photonic excitation into a charge separation, which transfers an electron from the donor P700 chlorophyll pair to the spectroscopically characterized acceptors A0, A1, FX, FA and FB in turn. Oxidized P700 is reduced on the lumenal side of the thylakoid membrane by plastocyanin. The sequence is that of Photosystem I P700 chlorophyll a apoprotein A1 from Calycanthus floridus var. glaucus (Eastern sweetshrub).